Consider the following 317-residue polypeptide: 17-beta-hydroxysteroid dehydrogenase type 6 (317 aa).

An N-terminal signal peptide occupies residues 1-17 (MWLYLAVLLGLYYLLRW). 33-57 (FITGCDSGFGNQLARQLDLRGLRVL) is an NAD(+) binding site. 2 N-linked (GlcNAc...) asparagine glycosylation sites follow: Asn71 and Asn161. Ser164 provides a ligand contact to substrate. Catalysis depends on Tyr176, which acts as the Proton acceptor.

Belongs to the short-chain dehydrogenases/reductases (SDR) family.

The protein resides in the microsome membrane. Its subcellular location is the endoplasmic reticulum membrane. It catalyses the reaction all-trans-retinol--[retinol-binding protein] + NAD(+) = all-trans-retinal--[retinol-binding protein] + NADH + H(+). It carries out the reaction all-trans-retinol + NAD(+) = all-trans-retinal + NADH + H(+). The catalysed reaction is androsterone + NAD(+) = 5alpha-androstan-3,17-dione + NADH + H(+). The enzyme catalyses testosterone + NAD(+) = androst-4-ene-3,17-dione + NADH + H(+). It catalyses the reaction 5alpha-androstane-3alpha,17beta-diol + NAD(+) = 17beta-hydroxy-5alpha-androstan-3-one + NADH + H(+). It carries out the reaction 17beta-estradiol + NAD(+) = estrone + NADH + H(+). The catalysed reaction is 17beta-estradiol + NADP(+) = estrone + NADPH + H(+). The enzyme catalyses 3alpha-hydroxy-5alpha-pregnan-20-one + NAD(+) = 5alpha-pregnane-3,20-dione + NADH + H(+). It catalyses the reaction 5alpha-androstane-3beta,17beta-diol + NAD(+) = 17beta-hydroxy-5alpha-androstan-3-one + NADH + H(+). It carries out the reaction 3beta-hydroxy-5alpha-androstan-17-one + NAD(+) = 5alpha-androstan-3,17-dione + NADH + H(+). Functionally, NAD-dependent oxidoreductase with broad substrate specificity that shows both oxidative and reductive activity (in vitro). Has 17-beta-hydroxysteroid dehydrogenase activity towards various steroids (in vitro). Converts 5-alpha-androstan-3-alpha,17-beta-diol to androsterone and estradiol to estrone (in vitro). Has 3-alpha-hydroxysteroid dehydrogenase activity towards androsterone (in vitro). Has retinol dehydrogenase activity towards all-trans-retinol (in vitro). Can convert androsterone to epi-androsterone. Androsterone is first oxidized to 5-alpha-androstane-3,17-dione and then reduced to epi-andosterone. Can act on both C-19 and C-21 3-alpha-hydroxysteroids. The sequence is that of 17-beta-hydroxysteroid dehydrogenase type 6 (HSD17B6) from Bos taurus (Bovine).